Reading from the N-terminus, the 124-residue chain is Large ribosomal subunit protein bL12 (124 aa).

This sequence belongs to the bacterial ribosomal protein bL12 family. In terms of assembly, homodimer. Part of the ribosomal stalk of the 50S ribosomal subunit. Forms a multimeric L10(L12)X complex, where L10 forms an elongated spine to which 2 to 4 L12 dimers bind in a sequential fashion. Binds GTP-bound translation factors.

Functionally, forms part of the ribosomal stalk which helps the ribosome interact with GTP-bound translation factors. Is thus essential for accurate translation. The sequence is that of Large ribosomal subunit protein bL12 from Rickettsia akari (strain Hartford).